The primary structure comprises 419 residues: Putative trans-acting enoyl reductase MT2525 (419 aa).

Lys127 is covalently cross-linked (Isoglutamyl lysine isopeptide (Lys-Gln) (interchain with Q-Cter in protein Pup)). Residues 197 to 232 (NDPDARRQLSDPYMLSPDRGAEPELGPQPDLPSRRG) form a disordered region. Residues 284 to 304 (VLAPVVSVVGGGVGNAMFGLA) form a helical membrane-spanning segment.

This sequence belongs to the saccharopine dehydrogenase family. Enoyl reductase subfamily.

The protein localises to the cell membrane. In Mycobacterium tuberculosis (strain CDC 1551 / Oshkosh), this protein is Putative trans-acting enoyl reductase MT2525.